Consider the following 341-residue polypeptide: Geranylgeranyl transferase type-2 subunit beta (341 aa).

PFTB repeat units lie at residues 15–55 (KSKH…ITMN), 62–104 (QQDV…KIYD), 122–163 (RERL…SLLN), 170–211 (ADTA…AIMN), 223–264 (VKLI…SILK), and 271–313 (LKIL…SLID). Geranylgeranyl diphosphate contacts are provided by residues 196-198 (HAA) and 243-255 (RPEK…YSWW). Residues Asp249, Cys251, and His301 each coordinate Zn(2+).

It belongs to the protein prenyltransferase subunit beta family. As to quaternary structure, heterodimer of an alpha and a beta subunit. It depends on Zn(2+) as a cofactor.

It carries out the reaction geranylgeranyl diphosphate + L-cysteinyl-[protein] = S-geranylgeranyl-L-cysteinyl-[protein] + diphosphate. In terms of biological role, catalyzes the transfer of a geranyl-geranyl moiety from geranyl-geranyl pyrophosphate to proteins having the C-terminal -XCC or -XCXC, where both cysteines may become modified. Acts on YPT1 and SEC4. In Candida albicans (Yeast), this protein is Geranylgeranyl transferase type-2 subunit beta (BET2).